Consider the following 419-residue polypeptide: Dual specificity mitogen-activated protein kinase kinase 7 (419 aa).

N-acetylalanine is present on A2. Positions 2–30 form a coiled coil; the sequence is AASSLEQKLSRLEAKLKQENREARRRIDL. Over residues 18 to 30 the composition is skewed to basic and acidic residues; the sequence is KQENREARRRIDL. A disordered region spans residues 18-77; the sequence is KQENREARRRIDLNLDISPQRPRPTLQLPLANDGGSRSPSSESSPQHPTPPSRPRHMLGL. The span at 36-63 shows a compositional bias: low complexity; that stretch reads PQRPRPTLQLPLANDGGSRSPSSESSPQ. Positions 37-57 are d Domain; the sequence is QRPRPTLQLPLANDGGSRSPS. The Protein kinase domain maps to 120-380; that stretch reads LENLGEMGSG…YNKLLEHSFI (261 aa). Residues 126–134 and K149 each bind ATP; that span reads MGSGTCGQV. The Proton acceptor role is filled by D243. A Phosphoserine; by MAP3K modification is found at S271. T275 bears the Phosphothreonine; by MAP3K mark. The DVD domain stretch occupies residues 377–400; it reads HSFIKHYETLEVDVASWFKDVMAK. Position 411 is a phosphoserine (S411).

This sequence belongs to the protein kinase superfamily. STE Ser/Thr protein kinase family. MAP kinase kinase subfamily. As to quaternary structure, interacts with VRK2. Interacts (via its D domain) with its substrates MAPK8/JNK1, MAPK9/JNK2 and MAPK10/JNK3. Interacts (via its DVD domain) with MAP3Ks activators like MAP3K5/ASK1 and MAP3K1/MEKK1. Interacts with MAPK8IP1/JIP1, MAPK8IP2/JIP2 and MAPK8IP3/JIP3 scaffold proteins. Interacts with RASSF7, the interaction promotes phosphorylation. Found in a complex with SH3RF1, RAC1, MAP3K11/MLK3, MAPK8IP1/JIP1 and MAPK8/JNK1. Found in a complex with SH3RF1, RAC2, MAP3K7/TAK1, MAPK8IP1/JIP1, MAPK8/JNK1 and MAPK9/JNK2. Mg(2+) serves as cofactor. Activated by phosphorylation on Ser-271 and Thr-275 by MAP kinase kinase kinases (MAP3Ks).

The protein resides in the nucleus. Its subcellular location is the cytoplasm. The enzyme catalyses L-seryl-[protein] + ATP = O-phospho-L-seryl-[protein] + ADP + H(+). The catalysed reaction is L-threonyl-[protein] + ATP = O-phospho-L-threonyl-[protein] + ADP + H(+). It catalyses the reaction L-tyrosyl-[protein] + ATP = O-phospho-L-tyrosyl-[protein] + ADP + H(+). With respect to regulation, activated by phosphorylation by specific MAP kinase kinase kinases such as MAP3K1/MEKK1, MAP3K3/MEKK3, MAP3K11/MLK3 and MAP3K12/DLK. Functionally, dual specificity protein kinase which acts as an essential component of the MAP kinase signal transduction pathway. Essential component of the stress-activated protein kinase/c-Jun N-terminal kinase (SAP/JNK) signaling pathway. With MAP2K4/MKK4, is the one of the only known kinase to directly activate the stress-activated protein kinase/c-Jun N-terminal kinases MAPK8/JNK1, MAPK9/JNK2 and MAPK10/JNK3. MAP2K4/MKK4 and MAP2K7/MKK7 both activate the JNKs by phosphorylation, but they differ in their preference for the phosphorylation site in the Thr-Pro-Tyr motif. MAP2K4/MKK4 shows preference for phosphorylation of the Tyr residue and MAP2K7/MKK7 for the Thr residue. The monophosphorylation of JNKs on the Thr residue is sufficient to increase JNK activity indicating that MAP2K7/MKK7 is important to trigger JNK activity, while the additional phosphorylation of the Tyr residue by MAP2K4/MKK4 ensures optimal JNK activation. Has a specific role in JNK signal transduction pathway activated by pro-inflammatory cytokines. The MKK/JNK signaling pathway is also involved in mitochondrial death signaling pathway, including the release cytochrome c, leading to apoptosis. Part of a non-canonical MAPK signaling pathway, composed of the upstream MAP3K12 kinase and downstream MAP kinases MAPK1/ERK2 and MAPK3/ERK1, that enhances the AP-1-mediated transcription of APP in response to APOE. In Rattus norvegicus (Rat), this protein is Dual specificity mitogen-activated protein kinase kinase 7.